Reading from the N-terminus, the 662-residue chain is DCC-interacting protein 13-beta (662 aa).

The region spanning 3–268 (AVDKLLLEEA…ESVYTPDIDV (266 aa)) is the BAR domain. In terms of domain architecture, PH spans 277–375 (LIQKTGYLNL…WICAINNISR (99 aa)). A PID domain is found at 486 to 635 (SLLQQMFIVR…LMLSVPLTND (150 aa)). The disordered stretch occupies residues 643–662 (DQADDTGGSPSDHRGAESEA). The span at 653-662 (SDHRGAESEA) shows a compositional bias: basic and acidic residues.

Homodimer. Homotetramer. Binds RAB5A/Rab5 through an N-terminal domain. This interaction is essential for its recruitment to endosomal membranes as well as its role in cell proliferation. Binds subunits of the NuRD/MeCP1 complex. Interacts with FSHR; interaction is independent of follicle stimulating hormone stimulation. Interacts with APPL1; the interaction is decreased by adiponectin in a time-dependent manner. Forms a complex comprising APPL1, RUVBL2, CTNNB1, HDAC1 and HDAC2; interaction reduces interaction between CTNNB1, HDAC1, HDAC2 and RUVBL2 leading to the decrease of deacetylase activity of this complex; affects the recruitment of repressive complexes to the Wnt target genes. Interacts (via BAR domain) with TBC1D1; interaction is dependent of TBC1D1 phosphorylation at 'Ser-235'; interaction diminishes the phosphorylation of TBC1D1 at 'Thr-596', resulting in inhibition of SLC2A4 translocation and glucose uptake. Interacts with ANXA2; targets APPL2 to endosomes and acting in parallel to RAB5A. Interacts with RAB31 (in GTP-bound form); interaction contributes to or enhances recruitment of APPL2 to the phagosomes; interaction enhances Fc-gamma receptor-mediated phagocytosis through PI3K/Akt signaling in macrophages. Interacts with PIK3R1; forms a complex with PIK3R1 and APPL1. Interacts (via BAR domain) with ADIPOR1; hinders the accessibility of APPL1 to ADIPOR1; negatively regulates adiponectin signaling; ADIPOQ dissociates this interaction and facilitates the recruitment of APPL1 to ADIPOR1. Interacts (via BAR domain) with ADIPOR2; ADIPOQ dissociates this interaction.

The protein resides in the early endosome membrane. It localises to the nucleus. The protein localises to the cell membrane. Its subcellular location is the endosome membrane. It is found in the cytoplasm. The protein resides in the cytoplasmic vesicle. It localises to the phagosome. The protein localises to the cell projection. Its subcellular location is the ruffle. It is found in the ruffle membrane. The protein resides in the phagosome membrane. In terms of biological role, multifunctional adapter protein that binds to various membrane receptors, nuclear factors and signaling proteins to regulate many processes, such as cell proliferation, immune response, endosomal trafficking and cell metabolism. Regulates signaling pathway leading to cell proliferation through interaction with RAB5A and subunits of the NuRD/MeCP1 complex. Plays a role in immune response by modulating phagocytosis, inflammatory and innate immune responses. In macrophages, enhances Fc-gamma receptor-mediated phagocytosis through interaction with RAB31 leading to activation of PI3K/Akt signaling. In response to LPS, modulates inflammatory responses by playing a key role on the regulation of TLR4 signaling and in the nuclear translocation of RELA/NF-kappa-B p65 and the secretion of pro- and anti-inflammatory cytokines. Also functions as a negative regulator of innate immune response via inhibition of AKT1 signaling pathway by forming a complex with APPL1 and PIK3R1. Plays a role in endosomal trafficking of TGFBR1 from the endosomes to the nucleus. Plays a role in cell metabolism by regulating adiponecting ans insulin signaling pathways and adaptative thermogenesis. In muscle, negatively regulates adiponectin-simulated glucose uptake and fatty acid oyidation by inhibiting adiponectin signaling pathway through APPL1 sequestration thereby antagonizing APPL1 action. In muscles, negatively regulates insulin-induced plasma membrane recruitment of GLUT4 and glucose uptake through interaction with TBC1D1. Plays a role in cold and diet-induced adaptive thermogenesis by activating ventromedial hypothalamus (VMH) neurons throught AMPK inhibition which enhances sympathetic outflow to subcutaneous white adipose tissue (sWAT), sWAT beiging and cold tolerance. Also plays a role in other signaling pathways namely Wnt/beta-catenin, HGF and glucocorticoid receptor signaling. Positive regulator of beta-catenin/TCF-dependent transcription through direct interaction with RUVBL2/reptin resulting in the relief of RUVBL2-mediated repression of beta-catenin/TCF target genes by modulating the interactions within the beta-catenin-reptin-HDAC complex. May affect adult neurogenesis in hippocampus and olfactory system via regulating the sensitivity of glucocorticoid receptor. Required for fibroblast migration through HGF cell signaling. The sequence is that of DCC-interacting protein 13-beta from Rattus norvegicus (Rat).